The sequence spans 464 residues: Glutamate decarboxylase (464 aa).

N6-(pyridoxal phosphate)lysine is present on Lys274.

Belongs to the group II decarboxylase family. The cofactor is pyridoxal 5'-phosphate.

The catalysed reaction is L-glutamate + H(+) = 4-aminobutanoate + CO2. Its function is as follows. Catalyzes the pyridoxal-dependent decarboxylation of glutamate to produce 4-aminobutanoate. Has weak activity with aspartate, but cannot complement an E.coli panD deletion mutant. This is Glutamate decarboxylase from Aliivibrio fischeri (strain ATCC 700601 / ES114) (Vibrio fischeri).